A 421-amino-acid polypeptide reads, in one-letter code: ATP-dependent RNA helicase RhlB (421 aa).

The short motif at 9–37 (QKFSDFALHPKVVEALEKKGFHNCTPIQA) is the Q motif element. Residues 40–219 (LPLTLAGRDV…FEQMNNAEYI (180 aa)) form the Helicase ATP-binding domain. ATP is bound at residue 53–60 (AQTGTGKT). Positions 165–168 (DEAD) match the DEAD box motif. The region spanning 245-390 (RLLQTLIEEE…VSKYNPDALM (146 aa)) is the Helicase C-terminal domain. Residues 392–421 (DLPKPLRLTRPRTGNGPRRTGTPRNRRRSG) are disordered. Residues 402-414 (PRTGNGPRRTGTP) show a composition bias toward low complexity.

The protein belongs to the DEAD box helicase family. RhlB subfamily. As to quaternary structure, component of the RNA degradosome, which is a multiprotein complex involved in RNA processing and mRNA degradation.

It is found in the cytoplasm. The catalysed reaction is ATP + H2O = ADP + phosphate + H(+). DEAD-box RNA helicase involved in RNA degradation. Has RNA-dependent ATPase activity and unwinds double-stranded RNA. This chain is ATP-dependent RNA helicase RhlB, found in Escherichia coli O7:K1 (strain IAI39 / ExPEC).